The primary structure comprises 267 residues: Orotidine 5'-phosphate decarboxylase (267 aa).

Lys93 (proton donor) is an active-site residue.

Belongs to the OMP decarboxylase family. Type 2 subfamily.

It carries out the reaction orotidine 5'-phosphate + H(+) = UMP + CO2. Its pathway is pyrimidine metabolism; UMP biosynthesis via de novo pathway; UMP from orotate: step 2/2. The sequence is that of Orotidine 5'-phosphate decarboxylase from Halobacterium salinarum (strain ATCC 29341 / DSM 671 / R1).